The chain runs to 257 residues: Protein YIPF5 (257 aa).

Topologically, residues 1–124 (MSGFENLNTD…KVADGSIMNE (124 aa)) are cytoplasmic. Residues 75 to 106 (PASPQPFYGNNFEDEPPLLEELGINFDHIWQK) form an interaction with Sec23 region. The chain crosses the membrane as a helical span at residues 125 to 145 (TDLAGPMVFCLAFGATLLLAG). Lys146 is a topological domain (lumenal). The chain crosses the membrane as a helical span at residues 147–167 (IQFGYVYGISAIGCLGMFCLL). Topologically, residues 168–173 (NLMSMT) are cytoplasmic. Residues 174-194 (GVSFGCVASVLGYCLLPMILL) traverse the membrane as a helical segment. Residues 195 to 196 (SS) lie on the Lumenal side of the membrane. A helical membrane pass occupies residues 197 to 217 (FAVIFSLQGMVGIILTAGIIG). Residues 218–236 (WCSFSASKIFISALAMEGQ) lie on the Cytoplasmic side of the membrane. The chain crosses the membrane as a helical span at residues 237 to 257 (QLLVAYPCALLYGVFALISVF).

Belongs to the YIP1 family. In terms of assembly, interacts with the COPII coat components Sec23 (SEC23A and/or SEC23B) and Sec24 (SEC24A and/or SEC24B). Interacts with YIF1A. May interact with RAB1A. Interacts with YIPF3 and YIPF4. In terms of tissue distribution, ubiquitously expressed with abundant expression in pancreatic tissue, islets, beta cells, and brain. Highly expressed in coronary smooth muscles.

It localises to the endoplasmic reticulum membrane. Its subcellular location is the golgi apparatus. The protein resides in the cis-Golgi network membrane. The protein localises to the cytoplasmic vesicle. It is found in the COPII-coated vesicle. Functionally, plays a role in transport between endoplasmic reticulum and Golgi. In pancreatic beta cells, required to transport proinsulin from endoplasmic reticulum into the Golgi. The sequence is that of Protein YIPF5 from Homo sapiens (Human).